Consider the following 736-residue polypeptide: Peroxisomal multifunctional enzyme type 2 (736 aa).

The tract at residues 1–305 (MGSPLRFDGR…IEVLSKIDSE (305 aa)) is (3R)-hydroxyacyl-CoA dehydrogenase. NAD(+) is bound by residues 13 to 37 (LVTG…ALVV), L21, and D40. K46 carries the N6-acetyllysine; alternate modification. K46 is modified (N6-succinyllysine; alternate). S52 is modified (phosphoserine). An N6-succinyllysine mark is found at K57 and K68. 75–76 (SV) contributes to the NAD(+) binding site. K84 is modified (N6-succinyllysine). Residue N99 coordinates NAD(+). S151 contacts substrate. Residue Y164 is the Proton acceptor of the active site. NAD(+)-binding positions include 164–168 (YSAAK) and 196–199 (AGSR). T265 is modified (phosphothreonine). K275 is subject to N6-succinyllysine. Phosphoserine occurs at positions 304 and 309. Residues 322 to 622 (SGFAGAIGQK…AKTPSEGGKL (301 aa)) form an enoyl-CoA hydratase 2 region. K356 is subject to N6-succinyllysine. Position 406–407 (406–407 (HG)) interacts with (3R)-3-hydroxydecanoyl-CoA. K424 carries the post-translational modification N6-succinyllysine. (3R)-3-hydroxydecanoyl-CoA contacts are provided by residues K435, 510–515 (DWNPLH), G533, and F563. One can recognise a MaoC-like domain in the interval 484–600 (IPNRPPDAVL…QETGDIVISN (117 aa)). K565 carries the N6-acetyllysine modification. Residues K579 and K663 each carry the N6-succinyllysine modification. The 113-residue stretch at 624-736 (STFVFEEIGR…QMILKDYAKL (113 aa)) folds into the SCP2 domain. N6-acetyllysine is present on K669. A substrate-binding site is contributed by Q706. Position 707 is an N6-acetyllysine (K707). A substrate-binding site is contributed by Q724. K725 is subject to N6-succinyllysine. Positions 734 to 736 (AKL) match the Microbody targeting signal motif.

It belongs to the short-chain dehydrogenases/reductases (SDR) family. In terms of assembly, homodimer. Present in many tissues with highest concentrations in liver, heart, prostate and testis.

It localises to the peroxisome. The catalysed reaction is a (3R)-3-hydroxyacyl-CoA + NAD(+) = a 3-oxoacyl-CoA + NADH + H(+). It catalyses the reaction a (3R)-3-hydroxyacyl-CoA = a (2E)-enoyl-CoA + H2O. The enzyme catalyses (24R,25R)-3alpha,7alpha,12alpha,24-tetrahydroxy-5beta-cholestan-26-oyl-CoA = (24E)-3alpha,7alpha,12alpha-trihydroxy-5beta-cholest-24-en-26-oyl-CoA + H2O. It carries out the reaction (2E)-octenoyl-CoA + H2O = (3R)-hydroxyoctanoyl-CoA. The catalysed reaction is (3R)-hydroxyoctanoyl-CoA + NAD(+) = 3-oxooctanoyl-CoA + NADH + H(+). It catalyses the reaction (3R)-hydroxyhexadecanoyl-CoA + NAD(+) = 3-oxohexadecanoyl-CoA + NADH + H(+). The enzyme catalyses (2E)-hexadecenedioyl-CoA + H2O = (3R)-hydroxyhexadecanedioyl-CoA. It carries out the reaction (3R)-hydroxyhexadecanedioyl-CoA + NAD(+) = 3-oxohexadecanedioyl-CoA + NADH + H(+). The catalysed reaction is (3R)-hydroxyhexadecanoyl-CoA = (2E)-hexadecenoyl-CoA + H2O. It catalyses the reaction (3R)-3-hydroxydecanoyl-CoA = (2E)-decenoyl-CoA + H2O. The enzyme catalyses (3R)-3-hydroxydecanoyl-CoA + NAD(+) = 3-oxodecanoyl-CoA + NADH + H(+). It carries out the reaction (24R,25R)-3alpha,7alpha,12alpha,24-tetrahydroxy-5beta-cholestan-26-oyl-CoA + NAD(+) = 3alpha,7alpha,12alpha-trihydroxy-24-oxo-5beta-cholestan-26-oyl-CoA + NADH + H(+). Its pathway is lipid metabolism; fatty acid beta-oxidation. Its function is as follows. Bifunctional enzyme acting on the peroxisomal fatty acid beta-oxidation pathway. Catalyzes two of the four reactions in fatty acid degradation: hydration of 2-enoyl-CoA (trans-2-enoyl-CoA) to produce (3R)-3-hydroxyacyl-CoA, and dehydrogenation of (3R)-3-hydroxyacyl-CoA to produce 3-ketoacyl-CoA (3-oxoacyl-CoA), which is further metabolized by SCPx. Can use straight-chain and branched-chain fatty acids, as well as bile acid intermediates as substrates. The sequence is that of Peroxisomal multifunctional enzyme type 2 from Homo sapiens (Human).